Consider the following 135-residue polypeptide: Histone H3 type 2 (135 aa).

Positions 1-40 are disordered; that stretch reads MARTKQTARKSTGGKAPRKQLATKAARKTPATGGVKKPHR. An N6-methyllysine modification is found at Lys-5. An N6-acetyllysine; alternate modification is found at Lys-10. An N6-methyllysine; alternate modification is found at Lys-10. Ser-11 bears the Phosphoserine mark. Position 12 is a phosphothreonine (Thr-12). N6-acetyllysine is present on residues Lys-15, Lys-19, and Lys-24. Position 28 is an N6-acetyllysine; alternate (Lys-28). At Lys-28 the chain carries N6-methyllysine; alternate. Lys-36 and Lys-37 each carry N6-methyllysine.

It belongs to the histone H3 family. In terms of assembly, the nucleosome is a histone octamer containing two molecules each of H2A, H2B, H3 and H4 assembled in one H3-H4 heterotetramer and two H2A-H2B heterodimers. The octamer wraps approximately 147 bp of DNA. Acetylation is generally linked to gene activation. Acetylated to form H3K9ac (11%), H3K14ac (17%), H3K18ac (11%), H3K23ac (16%) and H3K27ac (7%). H3K4, H3K35 and H3K36 are not acetylated. H3K4me prevents acetylation. 32% of the histone H3 are acetylated with, on average, 2.4 acetyl-Lys. They are all continuously deacatylated and re-acetylated with a half-life of approximately 2 minutes. Post-translationally, monomethylated to form H3K4me1 (81%), H3K9me1 (16%), H3K27me1 (25%), H3K35me1 (25%) and H3K36me1 (5%). No methylation at H3K14, H3K18 and H3K23. Methylated by a protein complex that includes Mut11. Set1 methylates specifically H3K4. H3K4me1 is associated with silenced euchromatin. Set3 forms H3K9me1, while H3K9me2 is undetected. H3K9me1 is specifically associated with silent, multi-copy transgenes. In terms of processing, no phosphorylation detected.

The protein localises to the nucleus. It is found in the chromosome. In terms of biological role, core component of nucleosome. Nucleosomes wrap and compact DNA into chromatin, limiting DNA accessibility to the cellular machineries which require DNA as a template. Histones thereby play a central role in transcription regulation, DNA repair, DNA replication and chromosomal stability. DNA accessibility is regulated via a complex set of post-translational modifications of histones, also called histone code, and nucleosome remodeling. The chain is Histone H3 type 2 (ch3-II) from Chlamydomonas reinhardtii (Chlamydomonas smithii).